Here is a 1770-residue protein sequence, read N- to C-terminus: Vitellogenin (1770 aa).

Positions 1 to 16 (MLLLLTLLLFAGTVAA) are cleaved as a signal peptide. The Vitellogenin domain maps to 22–809 (WQVGNEYTYL…SEDSVIPRIL (788 aa)). Cysteines 178 and 222 form a disulfide. The N-linked (GlcNAc...) asparagine glycan is linked to asparagine 296. A disordered region spans residues 373-394 (SSSSSISSSEENDFWQPKPTLE). An N-linked (GlcNAc...) asparagine glycan is attached at asparagine 1067. Residues 1442–1635 (TSCMLDKTRA…SYALISNQCE (194 aa)) form the VWFD domain. 2 cysteine pairs are disulfide-bonded: cysteine 1444–cysteine 1598 and cysteine 1466–cysteine 1634.

Accumulates in the hemolymph. Represents up to 70% of the queen's hemolymph proteins. During the first week of the worker adult life, when it becomes a nurse bee and performs brood-rearing tasks, the vitellogenin titer increases and may account for up to 40% of the total hemolymph proteins.

Its subcellular location is the secreted. In terms of biological role, precursor of the egg-yolk proteins that are sources of nutrients during embryonic development. Involved in the differentiation of honeybee larvae into queens. The sequence is that of Vitellogenin (Vg) from Apis mellifera (Honeybee).